The primary structure comprises 495 residues: Trigger factor (495 aa).

The region spanning 169-254 (GDRVAMDYVG…VKDVAAPGAV (86 aa)) is the PPIase FKBP-type domain. Residues 441–495 (LAEDEGEAKAETKKAAPKKKAAAKTEAAEAGEGEEAAAPKKKAAPKKKAADESAE) are disordered.

Belongs to the FKBP-type PPIase family. Tig subfamily.

Its subcellular location is the cytoplasm. The enzyme catalyses [protein]-peptidylproline (omega=180) = [protein]-peptidylproline (omega=0). Functionally, involved in protein export. Acts as a chaperone by maintaining the newly synthesized protein in an open conformation. Functions as a peptidyl-prolyl cis-trans isomerase. This Rhizobium etli (strain CIAT 652) protein is Trigger factor.